Consider the following 291-residue polypeptide: ATP synthase gamma chain (291 aa).

It belongs to the ATPase gamma chain family. In terms of assembly, F-type ATPases have 2 components, CF(1) - the catalytic core - and CF(0) - the membrane proton channel. CF(1) has five subunits: alpha(3), beta(3), gamma(1), delta(1), epsilon(1). CF(0) has three main subunits: a, b and c.

It localises to the cell inner membrane. In terms of biological role, produces ATP from ADP in the presence of a proton gradient across the membrane. The gamma chain is believed to be important in regulating ATPase activity and the flow of protons through the CF(0) complex. This Persephonella marina (strain DSM 14350 / EX-H1) protein is ATP synthase gamma chain.